We begin with the raw amino-acid sequence, 60 residues long: Mastoparan-VT1 (60 aa).

The N-terminal stretch at 1–25 (MKNTILILFTAFIALLGFFGMSAEA) is a signal peptide. Positions 26 to 45 (LADLKADPLAGPNPDADPEA) are excised as a propeptide. 3 AXPX repeats span residues 31-34 (ADPL), 35-38 (AGPN), and 41-44 (ADPE). Leu59 carries the post-translational modification Leucine amide.

It belongs to the MCD family. Mastoparan subfamily. Expressed by the venom gland.

It is found in the secreted. Functionally, antimicrobial peptide with activities against Gram-negative and Gram-positive bacteria and the fungi C.albicans and C.parapsilosis. Exhibits little hemolytic activity against washed human erythrocytes. Also acts as a mast cell degranulating peptide. Its mast cell degranulation activity may be related to the activation of G-protein coupled receptors in mast cells as well as interaction with other proteins located in cell endosomal membranes in the mast cells. Antimicrobial peptide with activities against Gram-negative and Gram-positive bacteria and the fungi C.albicans and C.parapsilosis. Exhibits little hemolytic activity against washed human erythrocytes. Also acts as a mast cell degranulating peptide. This is Mastoparan-VT1 from Vespa tropica (Greater banded hornet).